We begin with the raw amino-acid sequence, 835 residues long: Disease resistance protein RPP13 (835 aa).

Positions 25–41 (MAVKEDLEELKTELTCI) form a coiled coil. Residues 144-453 (SSLRVRQLRR…AEGFIQGDEE (310 aa)) form the NB-ARC domain. 192–199 (GMGGLGKT) serves as a coordination point for ATP.

The protein belongs to the disease resistance NB-LRR family. RPP13 subfamily.

Functionally, disease resistance protein. Resistance proteins guard the plant against pathogens that contain an appropriate avirulence protein via an indirect interaction with this avirulence protein. That triggers a defense system including the hypersensitive response, which restricts the pathogen growth. In contrast to other resistance proteins, it works independently of ESD1 and NSD1 proteins and does not require the accumulation of salicylic acid, suggesting the existence of an independent signaling pathway. The specificity to avirulence proteins differs in the different cultivars. The polypeptide is Disease resistance protein RPP13 (RPP13) (Arabidopsis thaliana (Mouse-ear cress)).